A 201-amino-acid chain; its full sequence is Histidine biosynthesis bifunctional protein HisIE (201 aa).

A phosphoribosyl-AMP cyclohydrolase region spans residues 1-114 (MLTAQQIEKL…FAPAQTEWGF (114 aa)). The segment at 115–201 (LYQLEKLLAS…SCVIRRLRER (87 aa)) is phosphoribosyl-ATP pyrophosphohydrolase.

In the N-terminal section; belongs to the PRA-CH family. It in the C-terminal section; belongs to the PRA-PH family.

It is found in the cytoplasm. The catalysed reaction is 1-(5-phospho-beta-D-ribosyl)-ATP + H2O = 1-(5-phospho-beta-D-ribosyl)-5'-AMP + diphosphate + H(+). It catalyses the reaction 1-(5-phospho-beta-D-ribosyl)-5'-AMP + H2O = 1-(5-phospho-beta-D-ribosyl)-5-[(5-phospho-beta-D-ribosylamino)methylideneamino]imidazole-4-carboxamide. The protein operates within amino-acid biosynthesis; L-histidine biosynthesis; L-histidine from 5-phospho-alpha-D-ribose 1-diphosphate: step 2/9. Its pathway is amino-acid biosynthesis; L-histidine biosynthesis; L-histidine from 5-phospho-alpha-D-ribose 1-diphosphate: step 3/9. This Photorhabdus laumondii subsp. laumondii (strain DSM 15139 / CIP 105565 / TT01) (Photorhabdus luminescens subsp. laumondii) protein is Histidine biosynthesis bifunctional protein HisIE.